Reading from the N-terminus, the 911-residue chain is ATP-dependent DNA helicase Q-like 5 (911 aa).

Positions 1-84 (MDFDSDSDGS…PPPSPLFTNL (84 aa)) are disordered. A compositionally biased stretch (low complexity) spans 20–48 (SFPSSPPQLQSPAKHVPPVSRKMTSSSSR). Over residues 54–79 (PTHPPPNPSQEAPVPSPYPPPPPPSP) the composition is skewed to pro residues. Residues 278–448 (IKMILGGSST…MSSLEIPSTN (171 aa)) enclose the Helicase ATP-binding domain. 291–298 (LPTGAGKS) provides a ligand contact to ATP. The DEAH box motif lies at 390–393 (DEAH). A Helicase C-terminal domain is found at 470 to 628 (RMKDLLILME…VFSTETKQHE (159 aa)).

Belongs to the helicase family. RecQ subfamily. Mostly expressed in roots, seedlings, shoots, shoot apical mersitem, flowers, and siliques.

Its subcellular location is the nucleus. The enzyme catalyses Couples ATP hydrolysis with the unwinding of duplex DNA by translocating in the 3'-5' direction.. The catalysed reaction is ATP + H2O = ADP + phosphate + H(+). Its function is as follows. 3'-5' DNA helicase that may play a role in the repair of DNA. The sequence is that of ATP-dependent DNA helicase Q-like 5 (RECQL5) from Arabidopsis thaliana (Mouse-ear cress).